Reading from the N-terminus, the 190-residue chain is Xanthine phosphoribosyltransferase (190 aa).

Xanthine contacts are provided by Leu20 and Asn27. Residue 128 to 132 (ANGKA) participates in 5-phospho-alpha-D-ribose 1-diphosphate binding. Residue Lys156 participates in xanthine binding.

The protein belongs to the purine/pyrimidine phosphoribosyltransferase family. Xpt subfamily. As to quaternary structure, homodimer.

It is found in the cytoplasm. The catalysed reaction is XMP + diphosphate = xanthine + 5-phospho-alpha-D-ribose 1-diphosphate. It functions in the pathway purine metabolism; XMP biosynthesis via salvage pathway; XMP from xanthine: step 1/1. Functionally, converts the preformed base xanthine, a product of nucleic acid breakdown, to xanthosine 5'-monophosphate (XMP), so it can be reused for RNA or DNA synthesis. This is Xanthine phosphoribosyltransferase from Pseudomonas putida (strain ATCC 700007 / DSM 6899 / JCM 31910 / BCRC 17059 / LMG 24140 / F1).